The chain runs to 593 residues: 3-hydroxy-3-methylglutaryl-coenzyme A reductase (593 aa).

Residues 1-36 (MDVRRRSINSIHQIPSVGGTAPPMLKPKQPTKVDAV) form a disordered region. 2 helical membrane-spanning segments follow: residues 52-72 (LYIT…YLLV) and 94-114 (AIFT…IGLV). A linker region spans residues 115-177 (QPFTSRSSHD…PVPISPPSSE (63 aa)). The catalytic stretch occupies residues 178–593 (EDEEIIKSVV…SNKDVTKASS (416 aa)). E272 functions as the Charge relay system in the catalytic mechanism. An N-linked (GlcNAc...) asparagine glycan is attached at N336. K404 (charge relay system) is an active-site residue. N449 carries an N-linked (GlcNAc...) asparagine glycan. The Charge relay system role is filled by D480. H578 acts as the Proton donor in catalysis. The N-linked (GlcNAc...) asparagine glycan is linked to N582.

The protein belongs to the HMG-CoA reductase family.

It is found in the endoplasmic reticulum membrane. It catalyses the reaction (R)-mevalonate + 2 NADP(+) + CoA = (3S)-3-hydroxy-3-methylglutaryl-CoA + 2 NADPH + 2 H(+). It participates in metabolic intermediate biosynthesis; (R)-mevalonate biosynthesis; (R)-mevalonate from acetyl-CoA: step 3/3. In terms of biological role, catalyzes the synthesis of mevalonate. The specific precursor of all isoprenoid compounds present in plants. The polypeptide is 3-hydroxy-3-methylglutaryl-coenzyme A reductase (Camptotheca acuminata (Happy tree)).